The following is a 140-amino-acid chain: UPF0132 membrane protein MJ1527 (140 aa).

The next 3 membrane-spanning stretches (helical) occupy residues 40-60, 70-90, and 92-112; these read MEGV…LLLE, AMQS…VSAI, and IIGW…WIVG.

Belongs to the UPF0132 family.

Its subcellular location is the cell membrane. In Methanocaldococcus jannaschii (strain ATCC 43067 / DSM 2661 / JAL-1 / JCM 10045 / NBRC 100440) (Methanococcus jannaschii), this protein is UPF0132 membrane protein MJ1527.